Consider the following 336-residue polypeptide: Ketol-acid reductoisomerase (NADP(+)) (336 aa).

The KARI N-terminal Rossmann domain occupies 2–181 (AKVYYEKDVM…GATRAGVLET (180 aa)). Residues 25-28 (YGSQ), arginine 48, serine 52, and 82-85 (DELQ) contribute to the NADP(+) site. Residue histidine 107 is part of the active site. An NADP(+)-binding site is contributed by glycine 133. A KARI C-terminal knotted domain is found at 182 to 327 (TFKEETETDL…RQLREMMPFV (146 aa)). Mg(2+) contacts are provided by aspartate 190, glutamate 194, glutamate 226, and glutamate 230. Residue serine 251 coordinates substrate.

The protein belongs to the ketol-acid reductoisomerase family. Mg(2+) is required as a cofactor.

It carries out the reaction (2R)-2,3-dihydroxy-3-methylbutanoate + NADP(+) = (2S)-2-acetolactate + NADPH + H(+). It catalyses the reaction (2R,3R)-2,3-dihydroxy-3-methylpentanoate + NADP(+) = (S)-2-ethyl-2-hydroxy-3-oxobutanoate + NADPH + H(+). The protein operates within amino-acid biosynthesis; L-isoleucine biosynthesis; L-isoleucine from 2-oxobutanoate: step 2/4. It participates in amino-acid biosynthesis; L-valine biosynthesis; L-valine from pyruvate: step 2/4. In terms of biological role, involved in the biosynthesis of branched-chain amino acids (BCAA). Catalyzes an alkyl-migration followed by a ketol-acid reduction of (S)-2-acetolactate (S2AL) to yield (R)-2,3-dihydroxy-isovalerate. In the isomerase reaction, S2AL is rearranged via a Mg-dependent methyl migration to produce 3-hydroxy-3-methyl-2-ketobutyrate (HMKB). In the reductase reaction, this 2-ketoacid undergoes a metal-dependent reduction by NADPH to yield (R)-2,3-dihydroxy-isovalerate. This Bacillus cytotoxicus (strain DSM 22905 / CIP 110041 / 391-98 / NVH 391-98) protein is Ketol-acid reductoisomerase (NADP(+)).